Reading from the N-terminus, the 152-residue chain is Protein NrdI (152 aa).

Belongs to the NrdI family.

Its function is as follows. Probably involved in ribonucleotide reductase function. This is Protein NrdI from Rhodococcus opacus (strain B4).